The following is a 360-amino-acid chain: Phospho-N-acetylmuramoyl-pentapeptide-transferase (360 aa).

The next 10 helical transmembrane spans lie at 25–45 (RGIL…PWMI), 73–93 (TMGG…WADL), 97–117 (YVWV…VDDY), 142–162 (IGAA…TLIV), 167–187 (SVEI…IVGS), 199–219 (GLAI…CYLS), 236–256 (AGEL…FLWF), 263–283 (VFMG…IAVI), 288–308 (IVLF…MIQV), and 338–358 (VIVR…ATLK).

The protein belongs to the glycosyltransferase 4 family. MraY subfamily. Requires Mg(2+) as cofactor.

The protein localises to the cell inner membrane. It catalyses the reaction UDP-N-acetyl-alpha-D-muramoyl-L-alanyl-gamma-D-glutamyl-meso-2,6-diaminopimeloyl-D-alanyl-D-alanine + di-trans,octa-cis-undecaprenyl phosphate = di-trans,octa-cis-undecaprenyl diphospho-N-acetyl-alpha-D-muramoyl-L-alanyl-D-glutamyl-meso-2,6-diaminopimeloyl-D-alanyl-D-alanine + UMP. Its pathway is cell wall biogenesis; peptidoglycan biosynthesis. In terms of biological role, catalyzes the initial step of the lipid cycle reactions in the biosynthesis of the cell wall peptidoglycan: transfers peptidoglycan precursor phospho-MurNAc-pentapeptide from UDP-MurNAc-pentapeptide onto the lipid carrier undecaprenyl phosphate, yielding undecaprenyl-pyrophosphoryl-MurNAc-pentapeptide, known as lipid I. The chain is Phospho-N-acetylmuramoyl-pentapeptide-transferase from Pseudomonas aeruginosa (strain LESB58).